The chain runs to 290 residues: AA9 family lytic polysaccharide monooxygenase A (290 aa).

The signal sequence occupies residues 1–17; the sequence is MKLSLLASVALVPFVSA. Residues histidine 18 and histidine 101 each contribute to the Cu(2+) site. Cysteine 67 and cysteine 189 are oxidised to a cystine. Histidine 176 serves as a coordination point for O2. Tyrosine 187 contacts Cu(2+). N-linked (GlcNAc...) asparagine glycans are attached at residues asparagine 220 and asparagine 254. A disordered region spans residues 240 to 290; it reads GGSGSGSSSYSKVANVTSSDESSQSGASSSQGTVSTCPNKYNRRHARQFKP. Low complexity predominate over residues 245-275; that stretch reads GSSSYSKVANVTSSDESSQSGASSSQGTVST. Basic residues predominate over residues 280–290; it reads YNRRHARQFKP.

It belongs to the polysaccharide monooxygenase AA9 family. Cu(2+) is required as a cofactor.

It is found in the secreted. The enzyme catalyses [(1-&gt;4)-beta-D-glucosyl]n+m + reduced acceptor + O2 = 4-dehydro-beta-D-glucosyl-[(1-&gt;4)-beta-D-glucosyl]n-1 + [(1-&gt;4)-beta-D-glucosyl]m + acceptor + H2O.. Functionally, lytic polysaccharide monooxygenase (LPMO) that depolymerizes crystalline and amorphous polysaccharides via the oxidation of scissile alpha- or beta-(1-4)-glycosidic bonds, yielding exclusively C1 oxidation products. Catalysis by LPMOs requires the reduction of the active-site copper from Cu(II) to Cu(I) by a reducing agent and H(2)O(2) or O(2) as a cosubstrate. This chain is AA9 family lytic polysaccharide monooxygenase A, found in Aspergillus fumigatus (strain ATCC MYA-4609 / CBS 101355 / FGSC A1100 / Af293) (Neosartorya fumigata).